The sequence spans 153 residues: Aspartate carbamoyltransferase regulatory chain (153 aa).

Positions 109, 114, 138, and 141 each coordinate Zn(2+).

It belongs to the PyrI family. In terms of assembly, contains catalytic and regulatory chains. It depends on Zn(2+) as a cofactor.

Involved in allosteric regulation of aspartate carbamoyltransferase. This chain is Aspartate carbamoyltransferase regulatory chain, found in Escherichia coli (strain ATCC 8739 / DSM 1576 / NBRC 3972 / NCIMB 8545 / WDCM 00012 / Crooks).